A 188-amino-acid chain; its full sequence is Probable manganese efflux pump MntP (188 aa).

5 helical membrane passes run 3–23, 66–86, 106–128, 143–163, and 168–188; these read ITAT…ASIG, LEWN…RMII, WLLV…GLAF, ATLI…PILG, and ILGG…HFHG.

It belongs to the MntP (TC 9.B.29) family.

Its subcellular location is the cell inner membrane. Its function is as follows. Probably functions as a manganese efflux pump. This Escherichia fergusonii (strain ATCC 35469 / DSM 13698 / CCUG 18766 / IAM 14443 / JCM 21226 / LMG 7866 / NBRC 102419 / NCTC 12128 / CDC 0568-73) protein is Probable manganese efflux pump MntP.